The primary structure comprises 595 residues: Protein kinase C iota type (595 aa).

Residues 1–12 show a composition bias toward polar residues; that stretch reads MPTQRDSSTMSH. A disordered region spans residues 1-21; it reads MPTQRDSSTMSHTVACGGGGD. Pro-2 bears the N-acetylproline mark. A required for interaction with RAB2 region spans residues 2-28; that stretch reads PTQRDSSTMSHTVACGGGGDHSHQVRV. Positions 2 to 252 are regulatory domain; it reads PTQRDSSTMS…KASSSLGLQD (251 aa). Thr-3 is modified (phosphothreonine). A phosphoserine mark is found at Ser-7 and Ser-8. At Thr-9 the chain carries Phosphothreonine. One can recognise a PB1 domain in the interval 25 to 108; it reads QVRVKAYYRG…SELLIHVFPC (84 aa). Residues 72 to 91 form an interaction with PARD6A region; the sequence is DEEGDPCTVSSQLELEEAFR. The short motif at 125-134 is the Pseudosubstrate element; sequence YRRGARRWRK. A Phorbol-ester/DAG-type zinc finger spans residues 140–190; that stretch reads GHTFQAKRFNRRAHCAICTDRIWGLGRQGYKCINCKLLVHKKCHKLVTIEC. Residues 253 to 521 form the Protein kinase domain; sequence FDLLRVIGRG…FADIQGHPFF (269 aa). Residue 259–267 coordinates ATP; sequence IGRGSYAKV. A phosphotyrosine; by SRC mark is found at Tyr-264 and Tyr-279. Lys-282 contacts ATP. Tyr-333 is modified (phosphotyrosine; by SRC). Residue Asp-377 is the Proton acceptor of the active site. Residues Thr-411 and Thr-563 each carry the phosphothreonine modification. One can recognise an AGC-kinase C-terminal domain in the interval 522–593; that stretch reads RNVDWDMMEQ…INPLLMSAEE (72 aa).

This sequence belongs to the protein kinase superfamily. AGC Ser/Thr protein kinase family. PKC subfamily. As to quaternary structure, forms a complex with SQSTM1 and MP2K5. Interacts directly with SQSTM1. Interacts with IKBKB. Interacts with PARD6A, PARD6B and PARD6G. Part of a quaternary complex containing aPKC, PARD3, a PARD6 protein (PARD6A, PARD6B or PARD6G) and a GTPase protein (CDC42 or RAC1). Part of a complex with LLGL1 and PARD6B. Interacts with ADAP1/CENTA1. Interaction with SMG1, through the ZN-finger domain, activates the kinase activity. Interacts with CDK7. Forms a complex with RAB2A and GAPDH involved in recruitment onto the membrane of vesicular tubular clusters (VTCs). Interacts with ECT2 ('Thr-359' phosphorylated form). Interacts with VAMP2. Interacts with WDFY2 (via WD repeats 1-3). Phosphorylation at Thr-411 in the activation loop is not mandatory for activation. Upon neuronal growth factor (NGF) stimulation, phosphorylated by SRC at Tyr-264, Tyr-279 and Tyr-333. Phosphorylation on Tyr-264 facilitates binding to KPNB1/importin-beta regulating entry of PRKCI into the nucleus. Phosphorylation on Tyr-333 is important for NF-kappa-B stimulation. Phosphorylated at Thr-563 during the initial phase of long term potentiation.

It is found in the cytoplasm. It localises to the membrane. Its subcellular location is the endosome. The protein resides in the nucleus. It catalyses the reaction L-seryl-[protein] + ATP = O-phospho-L-seryl-[protein] + ADP + H(+). The catalysed reaction is L-threonyl-[protein] + ATP = O-phospho-L-threonyl-[protein] + ADP + H(+). With respect to regulation, atypical PKCs (PRKCI and PRKCZ) exhibit an elevated basal enzymatic activity (that may be due to the interaction with SMG1 or SQSTM1) and are not regulated by diacylglycerol, phosphatidylserine, phorbol esters or calcium ions. Two specific sites, Thr-411 (activation loop of the kinase domain) and Thr-563 (turn motif), need to be phosphorylated for its full activation. Might also be a target for novel lipid activators that are elevated during nutrient-stimulated insulin secretion. In terms of biological role, calcium- and diacylglycerol-independent serine/ threonine-protein kinase that plays a general protective role against apoptotic stimuli, is involved in NF-kappa-B activation, cell survival, differentiation and polarity, and contributes to the regulation of microtubule dynamics in the early secretory pathway. Is necessary for BCR-ABL oncogene-mediated resistance to apoptotic drug in leukemia cells, protecting leukemia cells against drug-induced apoptosis. In cultured neurons, prevents amyloid beta protein-induced apoptosis by interrupting cell death process at a very early step. In glioblastoma cells, may function downstream of phosphatidylinositol 3-kinase (PI3K) and PDPK1 in the promotion of cell survival by phosphorylating and inhibiting the pro-apoptotic factor BAD. Can form a protein complex in non-small cell lung cancer (NSCLC) cells with PARD6A and ECT2 and regulate ECT2 oncogenic activity by phosphorylation, which in turn promotes transformed growth and invasion. In response to nerve growth factor (NGF), acts downstream of SRC to phosphorylate and activate IRAK1, allowing the subsequent activation of NF-kappa-B and neuronal cell survival. Functions in the organization of the apical domain in epithelial cells by phosphorylating EZR. This step is crucial for activation and normal distribution of EZR at the early stages of intestinal epithelial cell differentiation. Forms a protein complex with LLGL1 and PARD6B independently of PARD3 to regulate epithelial cell polarity. Plays a role in microtubule dynamics in the early secretory pathway through interaction with RAB2A and GAPDH and recruitment to vesicular tubular clusters (VTCs). In human coronary artery endothelial cells (HCAEC), is activated by saturated fatty acids and mediates lipid-induced apoptosis. Downstream of PI3K is required for insulin-stimulated glucose transport. Activates RAB4A and promotes its association with KIF3A which is required for the insulin-induced SLC2A4/GLUT4 translocation in adipocytes. Is essential in early embryogenesis and development of differentiating photoreceptors by playing a role in the establishment of epithelial and neuronal polarity. Involved in early synaptic long term potentiation phase in CA1 hippocampal cells and short term memory formation. In Mus musculus (Mouse), this protein is Protein kinase C iota type (Prkci).